We begin with the raw amino-acid sequence, 536 residues long: L-ornithine N(5)-monooxygenase SIDA (536 aa).

Positions 1-25 (MSPHRETTGDESTTTTVPQNGTNGA) are disordered. FAD contacts are provided by residues 115 to 123 (EKQTRFAWH) and Gln134. Position 139 (Lys139) interacts with L-ornithine. FAD is bound at residue Val200. Residue Arg310 participates in NADP(+) binding. L-ornithine is bound by residues 324–327 (NSIF) and Asn354. Position 515–517 (515–517 (TLL)) interacts with FAD. Ser518 is an L-ornithine binding site.

It belongs to the lysine N(6)-hydroxylase/L-ornithine N(5)-oxygenase family. Homotetramer. FAD is required as a cofactor.

The enzyme catalyses L-ornithine + NADH + O2 = N(5)-hydroxy-L-ornithine + NAD(+) + H2O. It catalyses the reaction L-ornithine + NADPH + O2 = N(5)-hydroxy-L-ornithine + NADP(+) + H2O. The protein operates within siderophore biosynthesis. Its function is as follows. L-ornithine N(5)-monooxygenase; part of the gene cluster that mediates the biosynthesis of at least 11 siderophores, including beauverichelin A, dimerumic acid (DA), Na-dimethyl coprogen (NADC), eleutherazine B, ferricrocin (FC), fusarinine A, fusarinine C (FsC), metachelin A, mevalonolactone, rhodotorulic acid (RA) and tenellin. This cocktail of siderophores for iron metabolism is essential for virulence, and more specifically for the fungal virulence in penetrating through the host cuticle. Siderophore synthesis is also involved in conidial germination under iron-deficient conditions. SIDA initiates the biosynthesis of these siderophores with the enzymatic hydroxylation of ornithine. SIDA is indispensable for the production of most siderophores including fusarinine C and ferricrocin but not mevalonolactone and eleutherazine B. However, SIDA mediates the metabolic interplay between synthesis of mevalonolactone and eleutherazine B and other siderophores. This chain is L-ornithine N(5)-monooxygenase SIDA, found in Beauveria bassiana (strain ARSEF 2860) (White muscardine disease fungus).